A 578-amino-acid polypeptide reads, in one-letter code: Vi polysaccharide biosynthesis protein VipC/TviE (578 aa).

It participates in glycan metabolism; Vi-antigen biosynthesis. Its pathway is capsule biogenesis; capsule polysaccharide biosynthesis. The polypeptide is Vi polysaccharide biosynthesis protein VipC/TviE (vipC) (Salmonella typhi).